A 375-amino-acid polypeptide reads, in one-letter code: Queuine tRNA-ribosyltransferase (375 aa).

Asp-89 (proton acceptor) is an active-site residue. Substrate is bound by residues 89-93, Asp-143, Gln-187, and Gly-214; that span reads DSGGF. Residues 245–251 are RNA binding; sequence GVGKPED. Asp-264 acts as the Nucleophile in catalysis. The RNA binding; important for wobble base 34 recognition stretch occupies residues 269–273; it reads TRNAR. The Zn(2+) site is built by Cys-302, Cys-304, Cys-307, and His-333.

Belongs to the queuine tRNA-ribosyltransferase family. Homodimer. Within each dimer, one monomer is responsible for RNA recognition and catalysis, while the other monomer binds to the replacement base PreQ1. Zn(2+) is required as a cofactor.

It carries out the reaction 7-aminomethyl-7-carbaguanine + guanosine(34) in tRNA = 7-aminomethyl-7-carbaguanosine(34) in tRNA + guanine. The protein operates within tRNA modification; tRNA-queuosine biosynthesis. Catalyzes the base-exchange of a guanine (G) residue with the queuine precursor 7-aminomethyl-7-deazaguanine (PreQ1) at position 34 (anticodon wobble position) in tRNAs with GU(N) anticodons (tRNA-Asp, -Asn, -His and -Tyr). Catalysis occurs through a double-displacement mechanism. The nucleophile active site attacks the C1' of nucleotide 34 to detach the guanine base from the RNA, forming a covalent enzyme-RNA intermediate. The proton acceptor active site deprotonates the incoming PreQ1, allowing a nucleophilic attack on the C1' of the ribose to form the product. After dissociation, two additional enzymatic reactions on the tRNA convert PreQ1 to queuine (Q), resulting in the hypermodified nucleoside queuosine (7-(((4,5-cis-dihydroxy-2-cyclopenten-1-yl)amino)methyl)-7-deazaguanosine). This Enterobacter sp. (strain 638) protein is Queuine tRNA-ribosyltransferase.